Consider the following 4650-residue polypeptide: Nonribosomal peptide synthetase lenA (4650 aa).

The segment at 227–628 (GSILDTIRAK…DGSVIHVGRK (402 aa)) is adenylation 1. One can recognise a Carrier 1 domain in the interval 773–849 (PPETVLEKAL…KLAQYLRNTE (77 aa)). Ser810 is modified (O-(pantetheine 4'-phosphoryl)serine). The tract at residues 890–1212 (EDCYPCTALQ…CDFQSQLIFQ (323 aa)) is condensation 1. An adenylation 2 region spans residues 1288–1622 (ELELNAQKEP…RKIRPGYLGR (335 aa)). The 78-residue stretch at 1745–1822 (PPVSAAEKKW…EIAALSETRD (78 aa)) folds into the Carrier 2 domain. Ser1782 bears the O-(pantetheine 4'-phosphoryl)serine mark. The tract at residues 1850 to 2110 (ATNLIAATVH…GEKTRPGGGA (261 aa)) is condensation 2. Positions 2183-2511 (RCVHDLVHDA…RTGDLIKLRG (329 aa)) are adenylation 3. In terms of domain architecture, Carrier 3 spans 2630–2708 (APQNRLQHDI…EADVGLDHAS (79 aa)). Ser2667 is modified (O-(pantetheine 4'-phosphoryl)serine). The segment at 2722–2998 (ESMARALAVI…KDARRRSPAN (277 aa)) is epimerase. The condensation 3 stretch occupies residues 3128–3565 (VQDVYPCTPI…VDDSQRQQIL (438 aa)). The adenylation 4 stretch occupies residues 3578-3980 (CVHHIIHQRC…FVGRKDNQIK (403 aa)). The region spanning 4114-4190 (TPSTPLEAQL…QLAAVLEEGA (77 aa)) is the Carrier 4 domain. O-(pantetheine 4'-phosphoryl)serine is present on Ser4151. The tract at residues 4249–4648 (HMVLTFSQPV…TTTPEKLVAE (400 aa)) is condensation 4.

It belongs to the NRP synthetase family. Pantetheine 4'-phosphate is required as a cofactor.

Its pathway is alkaloid biosynthesis. Functionally, nonribosomal peptide synthetase; part of the gene cluster that mediates the biosynthesis of the ergot alkaloids lentopeptins A and B. Within the pathway, lenA catalyzes the biosynthesis of the Ala-Val-Ala peptide chain, including a cinnamic acid moiety as the starting unit. The release of the peptide from the enzyme is accomplished via a cyclization reaction catalyzed by the terminal condensation-like (Ct) domain of lenA to form the N-acyldiketopiperazine intermediate. The reaction appears to proceed through a nucleophilic attack on the carbonyl carbon by a lone electron pair of the valine amide nitrogen. The phenylalanine ammonia-lyase lenB provides the starter unit for the synthesis of the N-acyldiketopiperazine intermediate by the NRPS lenA, while the cytochrome P450 monooxygenase lenC is involved in the post-NRPS oxidative modification steps to form lentopeptins A and B. The chain is Nonribosomal peptide synthetase lenA from Aspergillus lentulus.